Here is a 195-residue protein sequence, read N- to C-terminus: Imidazoleglycerol-phosphate dehydratase (195 aa).

The protein belongs to the imidazoleglycerol-phosphate dehydratase family.

It localises to the cytoplasm. It catalyses the reaction D-erythro-1-(imidazol-4-yl)glycerol 3-phosphate = 3-(imidazol-4-yl)-2-oxopropyl phosphate + H2O. It functions in the pathway amino-acid biosynthesis; L-histidine biosynthesis; L-histidine from 5-phospho-alpha-D-ribose 1-diphosphate: step 6/9. This chain is Imidazoleglycerol-phosphate dehydratase, found in Cereibacter sphaeroides (strain ATCC 17025 / ATH 2.4.3) (Rhodobacter sphaeroides).